The sequence spans 950 residues: MLYSSRGDPEGQPLLLSLLILAMWVVGSGQLHYSVPEEAKHGTFVGRIAQDLGLELAELVPRLFQLDSKGRGDLLEVNLQNGILFVNSRIDREELCGRSAECSIHLEVIVDRPLQVFHVDVEVKDINDNPPVFPATQKNLFIAESRPLDSRFPLEGASDADIGENALLTYRLSPNEYFFLDVPTSNQQVKPLGLVLRKLLDREETPELHLLLTATDGGKPELTGTVQLLITVLDNNDNAPVFDRTLYTVKLPENVSIGTLVIHPNASDLDEGLNGDIIYSFSSDVSPDIKSKFHMDPLSGAITVIGHMDFEESRAHKIPVEAVDKGFPPLAGHCTVLVEVVDVNDNAPQLTIKTLSVPVKEDAQLGTVIALISVTDLDADANGQVTCSLTPHVPFKLVSTYKNYYSLVLDRALDRESVSAYELVVTARDGGSPSLWATARVSVEVADVNDNAPAFAQPEYTVFVKENNPPGCHIFTVSARDADAQENALVSYSLVERRLGERSLWSYVSVHAESGKVYALQPLDHEELELLQFQVSARDAGVPPLGSNVTLQVFVLDENDNAPALLTPRMRGTDGAVSEMVLRSVGAGVVVGKVLAVDADSGYNAWLSYELQPETASASIPFRVGLYTGEISTTRALDETDAPRQRLLVLVKDHGEPALTATATVLVSLVESGQAPKSSSRASVGATGPEVTLVDVNVYLIIAICAVSSLLVLTLLLYTVLRCSAMPTEGECAPGKPTLVCSSAVGSWSYSQQRRQRVCSGEGPQKTDLMAFSPGLSPCAGSTERTGEPSASSDSSGKPRQPNPDWRYSASLRAGMHSSVHLEEAGILRAGPGGPDQQWPTVSSATPEPEAGEVSPPVGAGVNSNSWTFKYGPGNPKQSGPGELPDKFIIPGSPAIISIRQEPANSQIDKSDFITFGKKEETKKKKKKKKGNKTQEKKEKGNSTTDNSDQ.

The signal sequence occupies residues 1–29 (MLYSSRGDPEGQPLLLSLLILAMWVVGSG). 6 consecutive Cadherin domains span residues 30-133 (QLHY…PPVF), 134-242 (PATQ…APVF), 243-350 (DRTL…APQL), 351-455 (TIKT…APAF), 456-565 (AQPE…APAL), and 588-678 (GVVV…APKS). Residues 30-697 (QLHYSVPEEA…GPEVTLVDVN (668 aa)) are Extracellular-facing. N-linked (GlcNAc...) asparagine glycans are attached at residues Asn254 and Asn265. Asn548 is a glycosylation site (N-linked (GlcNAc...) asparagine). A helical transmembrane segment spans residues 698 to 718 (VYLIIAICAVSSLLVLTLLLY). The Cytoplasmic segment spans residues 719 to 950 (TVLRCSAMPT…GNSTTDNSDQ (232 aa)). The stretch at 734–737 (PGKP) is one PXXP 1 repeat. The 5 X 4 AA repeats of P-X-X-P stretch occupies residues 734–894 (PGKPTLVCSS…PDKFIIPGSP (161 aa)). Disordered regions lie at residues 759–808 (CSGE…DWRY) and 827–950 (ILRA…NSDQ). The segment covering 789 to 798 (PSASSDSSGK) has biased composition (polar residues). PXXP repeat units follow at residues 799–802 (PRQP), 832–835 (PGGP), 873–876 (PGNP), and 891–894 (PGSP). The span at 909 to 923 (DKSDFITFGKKEETK) shows a compositional bias: basic and acidic residues.

It localises to the cell membrane. Its function is as follows. Potential calcium-dependent cell-adhesion protein. May be involved in the establishment and maintenance of specific neuronal connections in the brain. This chain is Protocadherin alpha-9 (PCDHA9), found in Pan troglodytes (Chimpanzee).